The sequence spans 62 residues: Sperm protamine P1 (62 aa).

The interval 1-62 is disordered; sequence MARYRRHSRS…RYSRRGRRRY (62 aa).

Belongs to the protamine P1 family. Testis.

The protein resides in the nucleus. The protein localises to the chromosome. Its function is as follows. Protamines substitute for histones in the chromatin of sperm during the haploid phase of spermatogenesis. They compact sperm DNA into a highly condensed, stable and inactive complex. The chain is Sperm protamine P1 (PRM1) from Antechinomys laniger (Eastern jerboa marsupial).